The chain runs to 175 residues: Interferon gamma (175 aa).

Residues 1–23 (MNATCCILALLLCLTQAISGCYC) form the signal peptide. The residue at position 24 (Gln24) is a Pyrrolidone carboxylic acid. 2 N-linked (GlcNAc...) asparagine glycosylation sites follow: Asn39 and Asn106.

Belongs to the type II (or gamma) interferon family. Homodimer. Interacts with IFNGR1 (via extracellular domain); this interaction promotes IFNGR1 dimerization. As to expression, released primarily from activated T lymphocytes.

It localises to the secreted. Functionally, type II interferon produced by immune cells such as T-cells and NK cells that plays crucial roles in antimicrobial, antiviral, and antitumor responses by activating effector immune cells and enhancing antigen presentation. Primarily signals through the JAK-STAT pathway after interaction with its receptor IFNGR1 to affect gene regulation. Upon IFNG binding, IFNGR1 intracellular domain opens out to allow association of downstream signaling components JAK2, JAK1 and STAT1, leading to STAT1 activation, nuclear translocation and transcription of IFNG-regulated genes. Many of the induced genes are transcription factors such as IRF1 that are able to further drive regulation of a next wave of transcription. Plays a role in class I antigen presentation pathway by inducing a replacement of catalytic proteasome subunits with immunoproteasome subunits. In turn, increases the quantity, quality, and repertoire of peptides for class I MHC loading. Increases the efficiency of peptide generation also by inducing the expression of activator PA28 that associates with the proteasome and alters its proteolytic cleavage preference. Up-regulates as well MHC II complexes on the cell surface by promoting expression of several key molecules such as cathepsins B/CTSB, H/CTSH, and L/CTSL. Participates in the regulation of hematopoietic stem cells during development and under homeostatic conditions by affecting their development, quiescence, and differentiation. The protein is Interferon gamma (IFNG) of Peromyscus maniculatus (North American deer mouse).